The sequence spans 357 residues: Guanine nucleotide-binding protein alpha-2 subunit (357 aa).

Gly-2 carries N-myristoyl glycine lipidation. Cys-4 carries S-palmitoyl cysteine lipidation. The G-alpha domain maps to 30 to 356; sequence NEVKLLLLGA…TQCVMKAGLY (327 aa). A G1 motif region spans residues 33-46; sequence KLLLLGAGESGKST. 6 residues coordinate GTP: Glu-41, Ser-42, Gly-43, Lys-44, Ser-45, and Thr-46. Ser-45 provides a ligand contact to Mg(2+). Ser-113 carries the post-translational modification Phosphoserine. Positions 154, 179, 185, 207, 272, 273, 275, and 328 each coordinate GTP. Residues 177-185 are G2 motif; the sequence is DILHTRVMT. A Mg(2+)-binding site is contributed by Thr-185. The segment at 200–209 is G3 motif; it reads FRLVDVGGQR. The interval 268–275 is G4 motif; the sequence is ILFLNKSD. The segment at 326-331 is G5 motif; it reads TCATDT.

It belongs to the G-alpha family. In terms of assembly, g proteins are composed of 3 units; alpha, beta and gamma. The alpha chain contains the guanine nucleotide binding site. Interacts with the RAP guanine nucleotide exchange factor glfB. Mg(2+) serves as cofactor. In terms of processing, ser-113 is transiently phosphorylated following stimulation with extracellular cAMP.

In terms of biological role, guanine nucleotide-binding proteins (G proteins) are involved as modulators or transducers in various transmembrane signaling systems. G alpha-2 is required for the early aggregation process and most of the known cAMP receptor-mediated responses. Interacts with downstream effector gflB, a Rap guanine nucleotide exchange factor, to regulate the balance between Ras and Rap signaling at the leading edge of chemotaxing cells. This chain is Guanine nucleotide-binding protein alpha-2 subunit (gpaB), found in Dictyostelium discoideum (Social amoeba).